The primary structure comprises 518 residues: 2,3-bisphosphoglycerate-independent phosphoglycerate mutase (518 aa).

The Mn(2+) site is built by aspartate 14 and serine 64. Serine 64 acts as the Phosphoserine intermediate in catalysis. Substrate-binding positions include histidine 125, 155 to 156, arginine 187, arginine 193, 264 to 267, and lysine 337; these read RD and RPDR. Mn(2+) is bound by residues aspartate 404, histidine 408, aspartate 445, histidine 446, and histidine 467.

Belongs to the BPG-independent phosphoglycerate mutase family. The cofactor is Mn(2+).

The enzyme catalyses (2R)-2-phosphoglycerate = (2R)-3-phosphoglycerate. The protein operates within carbohydrate degradation; glycolysis; pyruvate from D-glyceraldehyde 3-phosphate: step 3/5. Functionally, catalyzes the interconversion of 2-phosphoglycerate and 3-phosphoglycerate. In Methanococcoides burtonii (strain DSM 6242 / NBRC 107633 / OCM 468 / ACE-M), this protein is 2,3-bisphosphoglycerate-independent phosphoglycerate mutase.